A 313-amino-acid chain; its full sequence is Ribosomal RNA small subunit methyltransferase H (313 aa).

S-adenosyl-L-methionine contacts are provided by residues 35–37 (GGH), Asp-55, Phe-81, Asp-103, and Gln-110.

Belongs to the methyltransferase superfamily. RsmH family.

The protein localises to the cytoplasm. The catalysed reaction is cytidine(1402) in 16S rRNA + S-adenosyl-L-methionine = N(4)-methylcytidine(1402) in 16S rRNA + S-adenosyl-L-homocysteine + H(+). Its function is as follows. Specifically methylates the N4 position of cytidine in position 1402 (C1402) of 16S rRNA. The chain is Ribosomal RNA small subunit methyltransferase H from Pseudomonas aeruginosa (strain UCBPP-PA14).